The primary structure comprises 300 residues: ATP synthase gamma chain (300 aa).

The protein belongs to the ATPase gamma chain family. F-type ATPases have 2 components, CF(1) - the catalytic core - and CF(0) - the membrane proton channel. CF(1) has five subunits: alpha(3), beta(3), gamma(1), delta(1), epsilon(1). CF(0) has three main subunits: a, b and c.

It is found in the cell membrane. In terms of biological role, produces ATP from ADP in the presence of a proton gradient across the membrane. The gamma chain is believed to be important in regulating ATPase activity and the flow of protons through the CF(0) complex. This is ATP synthase gamma chain from Acidothermus cellulolyticus (strain ATCC 43068 / DSM 8971 / 11B).